A 368-amino-acid polypeptide reads, in one-letter code: tRNA/tmRNA (uracil-C(5))-methyltransferase (368 aa).

S-adenosyl-L-methionine-binding residues include Gln190, Tyr218, Asn223, Glu239, and Asp301. Cys326 serves as the catalytic Nucleophile. Glu360 acts as the Proton acceptor in catalysis.

It belongs to the class I-like SAM-binding methyltransferase superfamily. RNA M5U methyltransferase family. TrmA subfamily.

It carries out the reaction uridine(54) in tRNA + S-adenosyl-L-methionine = 5-methyluridine(54) in tRNA + S-adenosyl-L-homocysteine + H(+). It catalyses the reaction uridine(341) in tmRNA + S-adenosyl-L-methionine = 5-methyluridine(341) in tmRNA + S-adenosyl-L-homocysteine + H(+). Dual-specificity methyltransferase that catalyzes the formation of 5-methyluridine at position 54 (m5U54) in all tRNAs, and that of position 341 (m5U341) in tmRNA (transfer-mRNA). The protein is tRNA/tmRNA (uracil-C(5))-methyltransferase of Photobacterium profundum (strain SS9).